The primary structure comprises 171 residues: ATP synthase subunit b (171 aa).

A helical membrane pass occupies residues 26 to 48 (LINLAIIIGLLVYAGRGFLGNLL).

It belongs to the ATPase B chain family. F-type ATPases have 2 components, F(1) - the catalytic core - and F(0) - the membrane proton channel. F(1) has five subunits: alpha(3), beta(3), gamma(1), delta(1), epsilon(1). F(0) has four main subunits: a(1), b(1), b'(1) and c(10-14). The alpha and beta chains form an alternating ring which encloses part of the gamma chain. F(1) is attached to F(0) by a central stalk formed by the gamma and epsilon chains, while a peripheral stalk is formed by the delta, b and b' chains.

It localises to the cellular thylakoid membrane. Its function is as follows. F(1)F(0) ATP synthase produces ATP from ADP in the presence of a proton or sodium gradient. F-type ATPases consist of two structural domains, F(1) containing the extramembraneous catalytic core and F(0) containing the membrane proton channel, linked together by a central stalk and a peripheral stalk. During catalysis, ATP synthesis in the catalytic domain of F(1) is coupled via a rotary mechanism of the central stalk subunits to proton translocation. Component of the F(0) channel, it forms part of the peripheral stalk, linking F(1) to F(0). This is ATP synthase subunit b from Synechococcus elongatus (strain ATCC 33912 / PCC 7942 / FACHB-805) (Anacystis nidulans R2).